The sequence spans 634 residues: DNA mismatch repair protein MutL (634 aa).

The interval 406–427 (HTHHNDTKGSVHTKSFSARSSS) is disordered.

It belongs to the DNA mismatch repair MutL/HexB family.

Its function is as follows. This protein is involved in the repair of mismatches in DNA. It is required for dam-dependent methyl-directed DNA mismatch repair. May act as a 'molecular matchmaker', a protein that promotes the formation of a stable complex between two or more DNA-binding proteins in an ATP-dependent manner without itself being part of a final effector complex. The polypeptide is DNA mismatch repair protein MutL (Anaplasma phagocytophilum (strain HZ)).